Reading from the N-terminus, the 416-residue chain is Probable sarcosine oxidase (416 aa).

Position 10-40 (10-40 (DVIVVGAGVMGSSAAYQLAKRGQKTLLLEQF)) interacts with FAD. S-8alpha-FAD cysteine is present on C325.

This sequence belongs to the MSOX/MTOX family. FAD is required as a cofactor.

It carries out the reaction sarcosine + O2 + H2O = formaldehyde + glycine + H2O2. The sequence is that of Probable sarcosine oxidase from Arabidopsis thaliana (Mouse-ear cress).